A 278-amino-acid chain; its full sequence is Insulin-like growth factor-binding protein-like 1 (278 aa).

The N-terminal stretch at 1-25 (MPRLSLLLPLLLLLLLPLLPPLSPS) is a signal peptide. In terms of domain architecture, IGFBP N-terminal spans 34 to 109 (RRPKCGPCRP…PEGTGLCVCA (76 aa)). Cystine bridges form between C38/C63, C41/C65, C46/C66, C52/C69, C77/C91, C85/C106, and C115/C151. A Kazal-like domain is found at 95 to 153 (AAGAAPEGTGLCVCAQRGTVCGSDGRSYPSVCALRLRARHTPRAHPGHLHKARDGPCEF). The Ig-like C2-type domain occupies 155–259 (PVVVVPPRSV…GEAESHSTVT (105 aa)). Residue N166 is glycosylated (N-linked (GlcNAc...) asparagine). Cysteines 176 and 243 form a disulfide.

In terms of tissue distribution, expressed at the highest level in both brain and testis, with lower levels in the prostate, bladder and lung.

The protein localises to the secreted. IGF-binding proteins prolong the half-life of IGFs and have been shown to either inhibit or stimulate the growth promoting effects of the IGFs in cell culture. They alter the interaction of IGFs with their cell surface receptors. May be a putative tumor suppressor protein. The polypeptide is Insulin-like growth factor-binding protein-like 1 (IGFBPL1) (Homo sapiens (Human)).